The chain runs to 76 residues: Theta defensin subunit B (76 aa).

The first 22 residues, 1–22 (MRTFALLTAMLLLVALQPQAEA), serve as a signal peptide directing secretion. A propeptide spanning residues 23-64 (RQARADEAAAQQQPGADDQGMAHSFTRPENAALPLSESAKGL) is cleaved from the precursor. The tract at residues 24–54 (QARADEAAAQQQPGADDQGMAHSFTRPENAA) is disordered. A compositionally biased stretch (low complexity) spans 30–44 (AAAQQQPGADDQGMA). Arg-65 is covalently cross-linked (Cyclopeptide (Arg-Cys) (interchain with C-73 in subunit A); in form BTD-1). Arg-65 is covalently cross-linked (Cyclopeptide (Arg-Cys) (interchain with C-73 in subunit B); in form BTD-2). A disulfide bridge links Cys-68 with Cys-73. Residue Cys-73 forms a Cyclopeptide (Cys-Arg) (interchain with R-65 in subunit A); in form BTD-1 linkage. Residue Cys-73 forms a Cyclopeptide (Cys-Arg) (interchain with R-65 in subunit B); in form BTD-2 linkage. Residues 74–76 (QLL) constitute a propeptide that is removed on maturation.

Belongs to the alpha-defensin family. Theta subfamily. As to quaternary structure, BTD-1 is a cyclic heterodimer composed of subunits A and B; disulfide-linked. BTD-2 is a cyclic homodimer composed of two subunits B; disulfide-linked. In terms of processing, forms a cyclic peptide with subunit A (BTD-1), or subunit B (BTD-2). An additional intersubunit disulfide bond is formed.

Functionally, BTD-1 and BTD-2 have antimicrobial activity against the Gram-negative bacterium E.coli ML35, the Gram-positive bacterium S.aureus 502a, and the fungus C.albicans 16820. BTD-2 is more effective against E.coli than BTD-1. The chain is Theta defensin subunit B (BTDB) from Papio anubis (Olive baboon).